We begin with the raw amino-acid sequence, 1297 residues long: Phosphoribosylformylglycinamidine synthase (1297 aa).

ATP-binding positions include 307–318 (GASTGSGGEIRD) and alanine 678. Residues glutamate 718, asparagine 722, and aspartate 886 each coordinate Mg(2+). Positions 1044–1297 (MAILREQGVN…MFQNARKNLG (254 aa)) constitute a Glutamine amidotransferase type-1 domain. The active-site Nucleophile is cysteine 1137. Active-site residues include histidine 1262 and glutamate 1264.

In the N-terminal section; belongs to the FGAMS family. As to quaternary structure, monomer.

The protein localises to the cytoplasm. It carries out the reaction N(2)-formyl-N(1)-(5-phospho-beta-D-ribosyl)glycinamide + L-glutamine + ATP + H2O = 2-formamido-N(1)-(5-O-phospho-beta-D-ribosyl)acetamidine + L-glutamate + ADP + phosphate + H(+). The protein operates within purine metabolism; IMP biosynthesis via de novo pathway; 5-amino-1-(5-phospho-D-ribosyl)imidazole from N(2)-formyl-N(1)-(5-phospho-D-ribosyl)glycinamide: step 1/2. Functionally, phosphoribosylformylglycinamidine synthase involved in the purines biosynthetic pathway. Catalyzes the ATP-dependent conversion of formylglycinamide ribonucleotide (FGAR) and glutamine to yield formylglycinamidine ribonucleotide (FGAM) and glutamate. In Vibrio vulnificus (strain CMCP6), this protein is Phosphoribosylformylglycinamidine synthase.